A 170-amino-acid polypeptide reads, in one-letter code: Adenine phosphoribosyltransferase (170 aa).

It belongs to the purine/pyrimidine phosphoribosyltransferase family. As to quaternary structure, homodimer.

The protein localises to the cytoplasm. The catalysed reaction is AMP + diphosphate = 5-phospho-alpha-D-ribose 1-diphosphate + adenine. It participates in purine metabolism; AMP biosynthesis via salvage pathway; AMP from adenine: step 1/1. In terms of biological role, catalyzes a salvage reaction resulting in the formation of AMP, that is energically less costly than de novo synthesis. The sequence is that of Adenine phosphoribosyltransferase from Clostridioides difficile (strain 630) (Peptoclostridium difficile).